A 176-amino-acid chain; its full sequence is MTVENLPRRQFLRGKFSTLSCLENNQKQNFVGIRPPWSVENSIFVARCTRCGDCLSVCETNILVKGDAGFPEVRFDNGECTFCGKCVDACKQPIFYPRDQLPWSHKIDISVSCLTLHRIECRTCQDNCPANAIRFKLQMGGVAQPLVNFDACNGCGACVQGCPVNAITMNDLKQNE.

4Fe-4S ferredoxin-type domains are found at residues 39–68 (VENS…KGDA) and 71–100 (PEVR…PRDQ). Residues Cys48, Cys51, Cys54, Cys58, Cys80, Cys83, Cys86, Cys90, Cys113, Cys121, Cys124, Cys128, Cys152, Cys155, Cys158, and Cys162 each contribute to the [4Fe-4S] cluster site. 4Fe-4S ferredoxin-type domains follow at residues 119 to 138 (IECR…FKLQ) and 143 to 172 (AQPL…MNDL).

This sequence belongs to the NapF family. Interacts with the cytoplasmic NapA precursor. [4Fe-4S] cluster serves as cofactor.

The protein resides in the cytoplasm. Could be involved in the maturation of NapA, the catalytic subunit of the periplasmic nitrate reductase, before its export into the periplasm. The protein is Ferredoxin-type protein NapF of Haemophilus influenzae (strain ATCC 51907 / DSM 11121 / KW20 / Rd).